Reading from the N-terminus, the 372-residue chain is L-selectin (372 aa).

Positions 1–28 (MIFPWKCQSTQRDLWNIFKLWGWTMLCC) are cleaved as a signal peptide. Positions 29 to 38 (DFLAHHGTDC) are excised as a propeptide. Residues 39–332 (WTYHYSEKPM…FSMIKEGDYN (294 aa)) are Extracellular-facing. One can recognise a C-type lectin domain in the interval 55–155 (RFCRDNYTDL…ACHKLKAALC (101 aa)). 10 disulfides stabilise this stretch: C57-C155, C128-C147, C128-C160, C160-C171, C165-C180, C182-C191, C197-C241, C227-C254, C259-C303, and C289-C316. Residues N60 and N104 are each glycosylated (N-linked (GlcNAc...) asparagine). The Ca(2+) site is built by E118, N120, E126, N143, and D144. An EGF-like domain is found at 156 to 192 (YTASCQPWSCSGHGECVEIINNYTCNCDVGYYGPQCQ). Residue N177 is glycosylated (N-linked (GlcNAc...) asparagine). Sushi domains lie at 195–256 (IQCE…TCQV) and 257–318 (IQCE…ICQK). N-linked (GlcNAc...) asparagine glycosylation is found at N216, N232, N246, and N271. A helical transmembrane segment spans residues 333-355 (PLFIPVAVMVTAFSGLAFIIWLA). The Cytoplasmic segment spans residues 356-372 (RRLKKGKKSKRSMDDPY).

Belongs to the selectin/LECAM family. As to quaternary structure, interaction with SELPLG/PSGL1 and PODXL2 is required for promoting recruitment and rolling of leukocytes. This interaction is dependent on the sialyl Lewis X glycan modification of SELPLG and PODXL2, and tyrosine sulfation modifications of SELPLG. Sulfation on 'Tyr-51' of SELPLG is important for L-selectin binding. In terms of processing, N-glycosylated.

Its subcellular location is the cell membrane. In terms of biological role, calcium-dependent lectin that mediates cell adhesion by binding to glycoproteins on neighboring cells. Mediates the adherence of lymphocytes to endothelial cells of high endothelial venules in peripheral lymph nodes. Promotes initial tethering and rolling of leukocytes in endothelia. The protein is L-selectin (SELL) of Pan troglodytes (Chimpanzee).